Consider the following 290-residue polypeptide: GTPase Era (290 aa).

Positions 2 to 169 (KSGFAAILGR…KNKIYENFSE (168 aa)) constitute an Era-type G domain. Residues 10–17 (GRPSTGKS) form a G1 region. 10–17 (GRPSTGKS) is a GTP binding site. The interval 36–40 (QTTRN) is G2. Residues 57 to 60 (DTPG) form a G3 region. Residues 57–61 (DTPGF) and 119–122 (NKVD) contribute to the GTP site. The G4 stretch occupies residues 119 to 122 (NKVD). The G5 stretch occupies residues 148-150 (ISA). A KH type-2 domain is found at 200–276 (LKEELPYSLY…NLFLQVKLKK (77 aa)).

Belongs to the TRAFAC class TrmE-Era-EngA-EngB-Septin-like GTPase superfamily. Era GTPase family. In terms of assembly, monomer.

The protein localises to the cytoplasm. It is found in the cell inner membrane. In terms of biological role, an essential GTPase that binds both GDP and GTP, with rapid nucleotide exchange. Plays a role in 16S rRNA processing and 30S ribosomal subunit biogenesis and possibly also in cell cycle regulation and energy metabolism. This chain is GTPase Era, found in Borrelia garinii subsp. bavariensis (strain ATCC BAA-2496 / DSM 23469 / PBi) (Borreliella bavariensis).